Reading from the N-terminus, the 183-residue chain is uncharacterized protein (183 aa).

This is an uncharacterized protein from Saccharolobus islandicus (Sulfolobus islandicus).